The chain runs to 175 residues: uncharacterized protein (175 aa).

This sequence belongs to the asfivirus B175L family.

This is an uncharacterized protein from African swine fever virus (strain Badajoz 1971 Vero-adapted) (Ba71V).